The following is a 973-amino-acid chain: MAAVMAAPEAVEAPSSLLLLVVGGECGCPGLLAYVMEELERGVRSWEDVDPAVCSLDEQLKAFVSRHSATFSSIVKGQRSLHHRGETLETLVLLNPSDKSLCDELRNLLMDPAPHKLLVLAGPCLEETGELLLQTGGFSAHHFLQVLGDKEVQDALASAPAAPALTVSCPTFGDWALLGPVPGLQLRLNPPAQLPASEGLRAFLEYVAESLEPPSPFELLEPPAAGGFLRLARPCCYVFPGGLGDAAFFAVNGFTVLVNGGSNPKSSFWKLVRHLDRVDAVLVTHAGADSLPGLNSLLRRKLAEREAAAGPQGQHEERLRRLLSPALGVVFLNAREAASRLRGGEDEAVCARSLLRSLGIAPLPLQRGPQPSCPTVLFEKLGVGRLELFVLHPPPGDPAAPACALLVWQPAAPGDKVVRVLFPGRTPPARLLDGLQRLQHLPCLRRPVVTTHDLEAPSRANSQDSLASRDSARKEPVRGTVGSIANRSTVRREPALATRDQKKDTRSGPTQPTARDTRRSGPGVVNTKPRVSQNGPRAPVLAAPLTAPVAECPGEAENILESERPPAPSPTLSPAQSPPPTAPGNSPERLSLSPLRPEPAPDASPSATTPTLTTPSLPAELGSPHSTEVDESLSVSFEQVLPAGDPGLSLPLRLARRSTSPHDVDLCLVSPCEFSHRKPPPPASPGSSDSSARSQERPPETPPTSVSESLPTLSDSDPVPVADSDDDAGSESAARDPPPTPRVPPPLPDVPGICMVDPEALPPRARQPLNTTNPSRSRKAPARPSSASATPRAATVAAKTKGPAGDRNRPLSARSEPADRPGRVPLTRKPSVPKTVPKMASATRLSSGPSGRPAPLAAGSPVYLDLAYLPGGGAGHLDQNFFLRVRALCYVISGQGQRQEEGLRAVLDALLAGKRQWDLDLQVTLIPTFDSAVMHRWYEETHAQHQALGIRVLGSGSLVSMQDEAFPACKVEF.

The tract at residues 1–716 (MAAVMAAPEA…SESLPTLSDS (716 aa)) is necessary for the microtubule-organizing center localization. Disordered stretches follow at residues 452–538 (HDLE…GPRA) and 560–853 (LESE…SGRP). Residues 459–468 (RANSQDSLAS) show a composition bias toward polar residues. S462 carries the phosphoserine modification. Residues 490 to 506 (VRREPALATRDQKKDTR) are compositionally biased toward basic and acidic residues. A compositionally biased stretch (pro residues) spans 565-582 (PPAPSPTLSPAQSPPPTA). Residues S586, S591, and S593 each carry the phosphoserine modification. The segment at 601–973 (PDASPSATTP…EAFPACKVEF (373 aa)) is necessary for interaction with RASSF1. Residues 603-621 (ASPSATTPTLTTPSLPAEL) show a composition bias toward low complexity. Positions 645–880 (DPGLSLPLRL…GGGAGHLDQN (236 aa)) are necessary for association with microtubules. Phosphoserine occurs at positions 660 and 684. A compositionally biased stretch (low complexity) spans 703–722 (PTSVSESLPTLSDSDPVPVA). A Phosphoserine modification is found at S724. Pro residues predominate over residues 736–749 (DPPPTPRVPPPLPD). Residues 782 to 801 (ARPSSASATPRAATVAAKTK) show a composition bias toward low complexity. The segment at 875 to 973 (GHLDQNFFLR…EAFPACKVEF (99 aa)) is necessary for association with actin. Positions 881–905 (FFLRVRALCYVISGQGQRQEEGLRA) are necessary for the mitochondrial aggregation and genome destruction.

It belongs to the MAP1 family. In terms of assembly, heterodimer of a heavy and a light chain. Interacts with microtubules and actin. Both MAP1S heavy and light chains interact with microtubules. MAP1S light chain interacts with actin. Interacts with ESR1, LRPPRC, RASSF1, microtubules and VCY2. Interacts with WDR47 (via N-terminus of light chain). Interacts (via C-terminus) with GAN (via Kelch domains). As to expression, expressed in ventral and dorsal horns of the spinal cord, hippocampus, cerebral cortex, molecular, Purkinje and granular cell layers of the cerebellum and in dorsal root ganglia of the PNS (at protein level). Expressed in brain, testis, heart, lung, kidney and liver.

It is found in the nucleus. The protein localises to the cytoplasm. It localises to the cytosol. The protein resides in the cytoskeleton. Its subcellular location is the spindle. Functionally, microtubule-associated protein that mediates aggregation of mitochondria resulting in cell death and genomic destruction (MAGD). Plays a role in anchoring the microtubule organizing center to the centrosomes. Binds to DNA. Plays a role in apoptosis. Involved in the formation of microtubule bundles. In Mus musculus (Mouse), this protein is Microtubule-associated protein 1S (Map1s).